The sequence spans 473 residues: Cysteine--tRNA ligase (473 aa).

Cys28 contributes to the Zn(2+) binding site. Residues 30-40 (MTVYDFCHIGH) carry the 'HIGH' region motif. Residues Cys212, His237, and Glu241 each coordinate Zn(2+). Positions 277–281 (KMSKS) match the 'KMSKS' region motif. Lys280 lines the ATP pocket.

The protein belongs to the class-I aminoacyl-tRNA synthetase family. As to quaternary structure, monomer. The cofactor is Zn(2+).

It localises to the cytoplasm. The catalysed reaction is tRNA(Cys) + L-cysteine + ATP = L-cysteinyl-tRNA(Cys) + AMP + diphosphate. The polypeptide is Cysteine--tRNA ligase (Polynucleobacter asymbioticus (strain DSM 18221 / CIP 109841 / QLW-P1DMWA-1) (Polynucleobacter necessarius subsp. asymbioticus)).